A 275-amino-acid chain; its full sequence is Large ribosomal subunit protein uL2 (275 aa).

The disordered stretch occupies residues 223–275 (VAMNPVDHPHGGGEGRTGEAREPVSPWGTPSKGFKTRRNKRTNNMIVQRRKRK). The span at 229-244 (DHPHGGGEGRTGEARE) shows a compositional bias: basic and acidic residues.

This sequence belongs to the universal ribosomal protein uL2 family. As to quaternary structure, part of the 50S ribosomal subunit. Forms a bridge to the 30S subunit in the 70S ribosome.

In terms of biological role, one of the primary rRNA binding proteins. Required for association of the 30S and 50S subunits to form the 70S ribosome, for tRNA binding and peptide bond formation. It has been suggested to have peptidyltransferase activity; this is somewhat controversial. Makes several contacts with the 16S rRNA in the 70S ribosome. The protein is Large ribosomal subunit protein uL2 of Bordetella petrii (strain ATCC BAA-461 / DSM 12804 / CCUG 43448).